Reading from the N-terminus, the 172-residue chain is Translation initiation factor IF-3 (172 aa).

This sequence belongs to the IF-3 family. In terms of assembly, monomer.

It is found in the cytoplasm. In terms of biological role, IF-3 binds to the 30S ribosomal subunit and shifts the equilibrium between 70S ribosomes and their 50S and 30S subunits in favor of the free subunits, thus enhancing the availability of 30S subunits on which protein synthesis initiation begins. The chain is Translation initiation factor IF-3 from Geobacter sulfurreducens (strain ATCC 51573 / DSM 12127 / PCA).